We begin with the raw amino-acid sequence, 329 residues long: Beta-ketoacyl-[acyl-carrier-protein] synthase III (329 aa).

Residues Cys123 and His256 contribute to the active site. The ACP-binding stretch occupies residues 257-261 (QANIR). The active site involves Asn286.

Belongs to the thiolase-like superfamily. FabH family. In terms of assembly, homodimer.

The protein localises to the cytoplasm. It carries out the reaction malonyl-[ACP] + acetyl-CoA + H(+) = 3-oxobutanoyl-[ACP] + CO2 + CoA. It participates in lipid metabolism; fatty acid biosynthesis. In terms of biological role, catalyzes the condensation reaction of fatty acid synthesis by the addition to an acyl acceptor of two carbons from malonyl-ACP. Catalyzes the first condensation reaction which initiates fatty acid synthesis and may therefore play a role in governing the total rate of fatty acid production. Possesses both acetoacetyl-ACP synthase and acetyl transacylase activities. Its substrate specificity determines the biosynthesis of branched-chain and/or straight-chain of fatty acids. The sequence is that of Beta-ketoacyl-[acyl-carrier-protein] synthase III from Burkholderia thailandensis (strain ATCC 700388 / DSM 13276 / CCUG 48851 / CIP 106301 / E264).